Consider the following 754-residue polypeptide: Phosphoribosylformylglycinamidine synthase subunit PurL (754 aa).

The active site involves histidine 52. Residues tyrosine 55 and lysine 95 each coordinate ATP. Glutamate 97 lines the Mg(2+) pocket. Residues 98–101 (SHNH) and arginine 120 contribute to the substrate site. Histidine 99 acts as the Proton acceptor in catalysis. Aspartate 121 lines the Mg(2+) pocket. Glutamine 244 serves as a coordination point for substrate. Aspartate 272 contributes to the Mg(2+) binding site. 316-318 (ESQ) contacts substrate. Residues asparagine 504 and glycine 541 each contribute to the ATP site. Residue asparagine 542 participates in Mg(2+) binding. Residue serine 544 coordinates substrate.

It belongs to the FGAMS family. Monomer. Part of the FGAM synthase complex composed of 1 PurL, 1 PurQ and 2 PurS subunits.

The protein localises to the cytoplasm. It carries out the reaction N(2)-formyl-N(1)-(5-phospho-beta-D-ribosyl)glycinamide + L-glutamine + ATP + H2O = 2-formamido-N(1)-(5-O-phospho-beta-D-ribosyl)acetamidine + L-glutamate + ADP + phosphate + H(+). It functions in the pathway purine metabolism; IMP biosynthesis via de novo pathway; 5-amino-1-(5-phospho-D-ribosyl)imidazole from N(2)-formyl-N(1)-(5-phospho-D-ribosyl)glycinamide: step 1/2. In terms of biological role, part of the phosphoribosylformylglycinamidine synthase complex involved in the purines biosynthetic pathway. Catalyzes the ATP-dependent conversion of formylglycinamide ribonucleotide (FGAR) and glutamine to yield formylglycinamidine ribonucleotide (FGAM) and glutamate. The FGAM synthase complex is composed of three subunits. PurQ produces an ammonia molecule by converting glutamine to glutamate. PurL transfers the ammonia molecule to FGAR to form FGAM in an ATP-dependent manner. PurS interacts with PurQ and PurL and is thought to assist in the transfer of the ammonia molecule from PurQ to PurL. The sequence is that of Phosphoribosylformylglycinamidine synthase subunit PurL from Salinibacter ruber (strain DSM 13855 / M31).